The following is a 105-amino-acid chain: Large ribosomal subunit protein mL49 (105 aa).

The N-terminal 15 residues, 1 to 15, are a transit peptide targeting the mitochondrion; it reads MRSSLKPVLSNLRFN.

The protein belongs to the mitochondrion-specific ribosomal protein mL49 family. As to quaternary structure, component of the mitochondrial large ribosomal subunit (mt-LSU). Mature yeast 74S mitochondrial ribosomes consist of a small (37S) and a large (54S) subunit. The 37S small subunit contains a 15S ribosomal RNA (15S mt-rRNA) and at least 32 different proteins. The 54S large subunit contains a 21S rRNA (21S mt-rRNA) and at least 45 different proteins.

It is found in the mitochondrion. In terms of biological role, component of the mitochondrial ribosome (mitoribosome), a dedicated translation machinery responsible for the synthesis of mitochondrial genome-encoded proteins, including at least some of the essential transmembrane subunits of the mitochondrial respiratory chain. The mitoribosomes are attached to the mitochondrial inner membrane and translation products are cotranslationally integrated into the membrane. This Schizosaccharomyces pombe (strain 972 / ATCC 24843) (Fission yeast) protein is Large ribosomal subunit protein mL49 (img2).